A 1267-amino-acid polypeptide reads, in one-letter code: DNA-directed RNA polymerase subunit beta (1267 aa).

This sequence belongs to the RNA polymerase beta chain family. The RNAP catalytic core consists of 2 alpha, 1 beta, 1 beta' and 1 omega subunit. When a sigma factor is associated with the core the holoenzyme is formed, which can initiate transcription.

The catalysed reaction is RNA(n) + a ribonucleoside 5'-triphosphate = RNA(n+1) + diphosphate. DNA-dependent RNA polymerase catalyzes the transcription of DNA into RNA using the four ribonucleoside triphosphates as substrates. This is DNA-directed RNA polymerase subunit beta (rpoB) from Carsonella ruddii (strain PV).